Here is a 234-residue protein sequence, read N- to C-terminus: 5'-methylthioadenosine/S-adenosylhomocysteine nucleosidase (234 aa).

The active-site Proton acceptor is glutamate 12. Substrate-binding positions include glycine 78, isoleucine 152, and 173–174; that span reads ME. Aspartate 197 (proton donor) is an active-site residue.

The protein belongs to the PNP/UDP phosphorylase family. MtnN subfamily.

It catalyses the reaction S-adenosyl-L-homocysteine + H2O = S-(5-deoxy-D-ribos-5-yl)-L-homocysteine + adenine. It carries out the reaction S-methyl-5'-thioadenosine + H2O = 5-(methylsulfanyl)-D-ribose + adenine. The catalysed reaction is 5'-deoxyadenosine + H2O = 5-deoxy-D-ribose + adenine. Its pathway is amino-acid biosynthesis; L-methionine biosynthesis via salvage pathway; S-methyl-5-thio-alpha-D-ribose 1-phosphate from S-methyl-5'-thioadenosine (hydrolase route): step 1/2. Catalyzes the irreversible cleavage of the glycosidic bond in both 5'-methylthioadenosine (MTA) and S-adenosylhomocysteine (SAH/AdoHcy) to adenine and the corresponding thioribose, 5'-methylthioribose and S-ribosylhomocysteine, respectively. Also cleaves 5'-deoxyadenosine, a toxic by-product of radical S-adenosylmethionine (SAM) enzymes, into 5-deoxyribose and adenine. This is 5'-methylthioadenosine/S-adenosylhomocysteine nucleosidase from Desulfotalea psychrophila (strain LSv54 / DSM 12343).